A 353-amino-acid chain; its full sequence is Envelope glycoprotein I (353 aa).

A signal peptide spans 1-20 (MLLWYTTASIMRYLMVFMLF). Over 21–274 (GIQCAAAIIY…SADVFMIAVP (254 aa)) the chain is Virion surface. Asn-40, Asn-75, Asn-84, Asn-122, Asn-138, Asn-227, and Asn-252 each carry an N-linked (GlcNAc...) asparagine; by host glycan. Residues 275–293 (ITASLLVILAIIIVVTVGI) form a helical membrane-spanning segment. Residues 294 to 353 (YRRRSSEKRKIYRPKRTKEQASTEKRERSESDVLLEAAVARLETIQEENPPHSVINPFTK) lie on the Intravirion side of the membrane. A disordered region spans residues 303–324 (KIYRPKRTKEQASTEKRERSES). Residues 310–324 (TKEQASTEKRERSES) show a composition bias toward basic and acidic residues.

It belongs to the alphaherpesvirinae glycoprotein I family. In terms of assembly, interacts with gE.

The protein resides in the virion membrane. Its subcellular location is the host cell membrane. It localises to the host cell junction. The protein localises to the host Golgi apparatus membrane. Its function is as follows. In epithelial cells, the heterodimer gE/gI is required for the cell-to-cell spread of the virus, by sorting nascent virions to cell junctions. Once the virus reaches the cell junctions, virus particles can spread to adjacent cells extremely rapidly through interactions with cellular receptors that accumulate at these junctions. Implicated in basolateral spread in polarized cells. In neuronal cells, gE/gI is essential for the anterograde spread of the infection throughout the host nervous system. Together with US9, the heterodimer gE/gI is involved in the sorting and transport of viral structural components toward axon tips. In Chlorocebus aethiops (Green monkey), this protein is Envelope glycoprotein I (gI).